A 394-amino-acid chain; its full sequence is Phosphopentomutase (394 aa).

6 residues coordinate Mn(2+): D13, D286, H291, D327, H328, and H339.

Belongs to the phosphopentomutase family. Mn(2+) serves as cofactor.

It is found in the cytoplasm. It catalyses the reaction 2-deoxy-alpha-D-ribose 1-phosphate = 2-deoxy-D-ribose 5-phosphate. The catalysed reaction is alpha-D-ribose 1-phosphate = D-ribose 5-phosphate. Its pathway is carbohydrate degradation; 2-deoxy-D-ribose 1-phosphate degradation; D-glyceraldehyde 3-phosphate and acetaldehyde from 2-deoxy-alpha-D-ribose 1-phosphate: step 1/2. Functionally, isomerase that catalyzes the conversion of deoxy-ribose 1-phosphate (dRib-1-P) and ribose 1-phosphate (Rib-1-P) to deoxy-ribose 5-phosphate (dRib-5-P) and ribose 5-phosphate (Rib-5-P), respectively. The sequence is that of Phosphopentomutase from Bacillus cereus (strain G9842).